A 784-amino-acid polypeptide reads, in one-letter code: Ribosome biogenesis protein BOP1 homolog (784 aa).

A compositionally biased stretch (basic residues) spans 1 to 11 (MTKKLALKRKG). Residues 1-159 (MTKKLALKRK…DSDTSDEEDI (159 aa)) form a disordered region. Acidic residues-rich tracts occupy residues 27–36 (SENEEEEEDL), 45–54 (EDSTDDEGID), 62–73 (SEELQFESDEEG), and 84–111 (AEED…EDEE). The span at 112–123 (KDSKSKQADDKP) shows a compositional bias: basic and acidic residues. The span at 124 to 133 (SSSGAASKKA) shows a compositional bias: low complexity. Over residues 138-148 (LSKRDTSKPEY) the composition is skewed to basic and acidic residues. Residues 149–158 (QDSDTSDEED) are compositionally biased toward acidic residues. 7 WD repeats span residues 445–486 (GHTD…RTIE), 488–526 (DEVV…KVLV), 570–612 (THFK…SQIP), 615–653 (KSKG…LVKK), 656–695 (TNSK…KPYQ), 699–738 (LHRN…DLLQ), and 754–784 (RDEF…RLYT).

Belongs to the WD repeat BOP1/ERB1 family.

Its subcellular location is the nucleus. It localises to the nucleolus. It is found in the nucleoplasm. Required for maturation of ribosomal RNAs and formation of the large ribosomal subunit. The polypeptide is Ribosome biogenesis protein BOP1 homolog (Drosophila yakuba (Fruit fly)).